The sequence spans 256 residues: Hemin import ATP-binding protein HmuV (256 aa).

The ABC transporter domain maps to I2–D238. G34–S41 contributes to the ATP binding site.

It belongs to the ABC transporter superfamily. Heme (hemin) importer (TC 3.A.1.14.5) family. In terms of assembly, the complex is composed of two ATP-binding proteins (HmuV), two transmembrane proteins (HmuU) and a solute-binding protein (HmuT).

It is found in the cell inner membrane. Functionally, part of the ABC transporter complex HmuTUV involved in hemin import. Responsible for energy coupling to the transport system. This chain is Hemin import ATP-binding protein HmuV, found in Escherichia coli O157:H7.